Consider the following 219-residue polypeptide: Oxaloacetate tautomerase YcgM (219 aa).

Mg(2+) is bound by residues Glu-70, Glu-72, and Asp-101.

The protein belongs to the FAH family. Requires a divalent metal cation as cofactor.

The catalysed reaction is oxaloacetate = enol-oxaloacetate. Its function is as follows. Tautomerase that converts enol-oxaloacetate to the keto form of oxaloacetate. In Escherichia coli (strain K12), this protein is Oxaloacetate tautomerase YcgM.